A 239-amino-acid polypeptide reads, in one-letter code: UDP-2,3-diacylglucosamine hydrolase (239 aa).

Asp9, His11, Asp42, Asn80, and His115 together coordinate Mn(2+). 80–81 serves as a coordination point for substrate; it reads NR. Substrate contacts are provided by Asp123, Ser161, Lys165, Lys168, and His196. The Mn(2+) site is built by His196 and His198.

Belongs to the LpxH family. The cofactor is Mn(2+).

It is found in the cell inner membrane. The catalysed reaction is UDP-2-N,3-O-bis[(3R)-3-hydroxytetradecanoyl]-alpha-D-glucosamine + H2O = 2-N,3-O-bis[(3R)-3-hydroxytetradecanoyl]-alpha-D-glucosaminyl 1-phosphate + UMP + 2 H(+). It functions in the pathway glycolipid biosynthesis; lipid IV(A) biosynthesis; lipid IV(A) from (3R)-3-hydroxytetradecanoyl-[acyl-carrier-protein] and UDP-N-acetyl-alpha-D-glucosamine: step 4/6. Functionally, hydrolyzes the pyrophosphate bond of UDP-2,3-diacylglucosamine to yield 2,3-diacylglucosamine 1-phosphate (lipid X) and UMP by catalyzing the attack of water at the alpha-P atom. Involved in the biosynthesis of lipid A, a phosphorylated glycolipid that anchors the lipopolysaccharide to the outer membrane of the cell. The protein is UDP-2,3-diacylglucosamine hydrolase of Pasteurella multocida (strain Pm70).